We begin with the raw amino-acid sequence, 268 residues long: Phosphate import ATP-binding protein PstB (268 aa).

An ABC transporter domain is found at 22–263; the sequence is LAVRNLNFYY…PKQQQTQDYI (242 aa). An ATP-binding site is contributed by 54–61; that stretch reads GPSGCGKS.

This sequence belongs to the ABC transporter superfamily. Phosphate importer (TC 3.A.1.7) family. The complex is composed of two ATP-binding proteins (PstB), two transmembrane proteins (PstC and PstA) and a solute-binding protein (PstS).

It localises to the cell inner membrane. It carries out the reaction phosphate(out) + ATP + H2O = ADP + 2 phosphate(in) + H(+). Functionally, part of the ABC transporter complex PstSACB involved in phosphate import. Responsible for energy coupling to the transport system. The polypeptide is Phosphate import ATP-binding protein PstB (Gluconobacter oxydans (strain 621H) (Gluconobacter suboxydans)).